We begin with the raw amino-acid sequence, 313 residues long: Ribosomal RNA small subunit methyltransferase H (313 aa).

Residues 35–37, Asp55, Phe79, Asp101, and Gln108 each bind S-adenosyl-L-methionine; that span reads GGH. The tract at residues 276–300 is disordered; the sequence is QGGPTLKSVGKMMPPDDEVADNPRA.

Belongs to the methyltransferase superfamily. RsmH family.

It is found in the cytoplasm. It carries out the reaction cytidine(1402) in 16S rRNA + S-adenosyl-L-methionine = N(4)-methylcytidine(1402) in 16S rRNA + S-adenosyl-L-homocysteine + H(+). Specifically methylates the N4 position of cytidine in position 1402 (C1402) of 16S rRNA. In Dickeya chrysanthemi (strain Ech1591) (Dickeya zeae (strain Ech1591)), this protein is Ribosomal RNA small subunit methyltransferase H.